Consider the following 968-residue polypeptide: RNA polymerase-associated protein RapA (968 aa).

The region spanning 164–334 (DVGRRHAPRV…FARLRLLDPN (171 aa)) is the Helicase ATP-binding domain. 177-184 (DEVGLGKT) is a binding site for ATP. Positions 280-283 (DEAH) match the DEAH box motif. One can recognise a Helicase C-terminal domain in the interval 490–662 (RVEWLMGYLT…YLAAPENTEG (173 aa)).

The protein belongs to the SNF2/RAD54 helicase family. RapA subfamily. As to quaternary structure, interacts with the RNAP. Has a higher affinity for the core RNAP than for the holoenzyme. Its ATPase activity is stimulated by binding to RNAP.

In terms of biological role, transcription regulator that activates transcription by stimulating RNA polymerase (RNAP) recycling in case of stress conditions such as supercoiled DNA or high salt concentrations. Probably acts by releasing the RNAP, when it is trapped or immobilized on tightly supercoiled DNA. Does not activate transcription on linear DNA. Probably not involved in DNA repair. This is RNA polymerase-associated protein RapA from Cronobacter sakazakii (strain ATCC BAA-894) (Enterobacter sakazakii).